Consider the following 634-residue polypeptide: MTNSNLRTENHFDYVKISIASPQRIMDWGQRTLPNGQVVGEVTKPETINYRTLKPEMDGLFCEKIFGPSKDWECHCGKYKRVRHRGIVCERCGVEVTESRVRRHRMGYIKLAAPVSHVWYLKGIPSYVAILLDIPLRDVEQIVYFNCYVVLDVGDHKDLKYKQLLTEDEWLEIEDEIYAEDSTIENEPFVGIGAEALKQLLEDLDLNQIAEELREEITNSKGQKRAKLIKRIRVIDNFIATNAKPEWMVLDAIPVIPPDLRPMVQLDGGRFATSDLNDLYRRVINRNNRLARLQEILAPEIIVRNEKRMLQEAVDALIDNGRRGRTVVGANNRALKSLSDIIEGKQGRFRQNLLGKRVDYSGRSVIVVGPKLKMHQCGLPKEMAIELFQPFVIHRLIRQNIVNNIKAAKKLIQKADDEVMQVLQEVIEGHPILLNRAPTLHRLGIQAFEPKLVGGRAIQLHPLVCPAFNADFDGDQMAVHVPLALEAQTEARMLMLASNNILSPATGEPIVTPSQDMVLGSYYLTALQPNFKKPNFGDNQRTYASLEDVIFAFEDKRVGLHEWVWLRFNGEVDDDEESKTPQETKELEDGSKLEIWNFRRDRFDSQNNLISRFILTTVGRVVMNHTIIDSVSKT.

Zn(2+)-binding residues include cysteine 74, cysteine 76, cysteine 89, and cysteine 92. Aspartate 471, aspartate 473, and aspartate 475 together coordinate Mg(2+).

This sequence belongs to the RNA polymerase beta' chain family. RpoC1 subfamily. As to quaternary structure, in cyanobacteria the RNAP catalytic core is composed of 2 alpha, 1 beta, 1 beta', 1 gamma and 1 omega subunit. When a sigma factor is associated with the core the holoenzyme is formed, which can initiate transcription. The cofactor is Mg(2+). It depends on Zn(2+) as a cofactor.

The enzyme catalyses RNA(n) + a ribonucleoside 5'-triphosphate = RNA(n+1) + diphosphate. DNA-dependent RNA polymerase catalyzes the transcription of DNA into RNA using the four ribonucleoside triphosphates as substrates. This Prochlorococcus marinus (strain MIT 9515) protein is DNA-directed RNA polymerase subunit gamma.